A 207-amino-acid chain; its full sequence is LexA repressor (207 aa).

The H-T-H motif DNA-binding region spans 29–49 (VREICSAVDLSSTSTVHGHLA). Catalysis depends on for autocatalytic cleavage activity residues Ser128 and Lys166.

This sequence belongs to the peptidase S24 family. As to quaternary structure, homodimer.

The enzyme catalyses Hydrolysis of Ala-|-Gly bond in repressor LexA.. Represses a number of genes involved in the response to DNA damage (SOS response), including recA and lexA. In the presence of single-stranded DNA, RecA interacts with LexA causing an autocatalytic cleavage which disrupts the DNA-binding part of LexA, leading to derepression of the SOS regulon and eventually DNA repair. This is LexA repressor from Lactobacillus johnsonii (strain CNCM I-12250 / La1 / NCC 533).